The sequence spans 367 residues: MSLADSVLAVNNDLPIRTDNPVHSGKVRSVYWLTDADSRRLIQTKGYNVPEDTPLAIMVISDRISAFDCIFHGEGGLKGIPGKGAALNAISNHWFKLFAENGLADSHILDIPHPFVWIVQKARPIKVEAICRQYITGSMWRAYSKGERVFCGITLPEGLEKDQKLPDLLITPSTKGILTGIPGVPAQDDVNISRSDIEANYQAFGFEKVEDIDLYEKLLKDGFKVIAKALADLDQVFVDTKFEFGYVTDKNGNSKLIYMDEVGTPDSSRIWDGAAYRDGKILENSKEGFRQFLLNHFPDPDILLNKDRMPEREALARDNALPLEAMMDVSRTYTGIAEKVTGAAIPLPANPKADIIKILREEYDLIV.

This sequence belongs to the SAICAR synthetase family.

It catalyses the reaction 5-amino-1-(5-phospho-D-ribosyl)imidazole-4-carboxylate + L-aspartate + ATP = (2S)-2-[5-amino-1-(5-phospho-beta-D-ribosyl)imidazole-4-carboxamido]succinate + ADP + phosphate + 2 H(+). It participates in purine metabolism; IMP biosynthesis via de novo pathway; 5-amino-1-(5-phospho-D-ribosyl)imidazole-4-carboxamide from 5-amino-1-(5-phospho-D-ribosyl)imidazole-4-carboxylate: step 1/2. The chain is Phosphoribosylaminoimidazole-succinocarboxamide synthase from Shewanella sp. (strain MR-4).